The following is a 262-amino-acid chain: Probable proteasome subunit beta type-7 (262 aa).

The protein belongs to the peptidase T1B family. In terms of assembly, the 26S proteasome consists of a 20S proteasome core and two 19S regulatory subunits. The 20S proteasome core is composed of 28 subunits that are arranged in four stacked rings, resulting in a barrel-shaped structure. The two end rings are each formed by seven alpha subunits, and the two central rings are each formed by seven beta subunits. The catalytic chamber with the active sites is on the inside of the barrel.

The protein resides in the cytoplasm. Its subcellular location is the nucleus. In terms of biological role, non-catalytic component of the proteasome, a multicatalytic proteinase complex which is characterized by its ability to cleave peptides with Arg, Phe, Tyr, Leu, and Glu adjacent to the leaving group at neutral or slightly basic pH. The proteasome has an ATP-dependent proteolytic activity. The sequence is that of Probable proteasome subunit beta type-7 from Schizosaccharomyces pombe (strain 972 / ATCC 24843) (Fission yeast).